We begin with the raw amino-acid sequence, 172 residues long: Peptidyl-prolyl cis-trans isomerase CYP18-4 (172 aa).

Residues 7-170 (FFDMSLSGTP…KVVTITDCGQ (164 aa)) enclose the PPIase cyclophilin-type domain.

It belongs to the cyclophilin-type PPIase family. Interacts with A.tumefaciens VirD2. As to expression, ubiquitous, with higher levels in roots and flowers. Confined to vascular tissues. Also detected in stigmas, base of siliques and anthers.

It localises to the cytoplasm. The catalysed reaction is [protein]-peptidylproline (omega=180) = [protein]-peptidylproline (omega=0). Its activity is regulated as follows. Binds cyclosporin A (CsA). CsA mediates some of its effects via an inhibitory action on PPIase. PPIases accelerate the folding of proteins. It catalyzes the cis-trans isomerization of proline imidic peptide bonds in oligopeptides. This is Peptidyl-prolyl cis-trans isomerase CYP18-4 (CYP18-4) from Arabidopsis thaliana (Mouse-ear cress).